Reading from the N-terminus, the 346-residue chain is Arsenite methyltransferase (346 aa).

It belongs to the methyltransferase superfamily. Arsenite methyltransferase family.

It carries out the reaction arsenic triglutathione + [thioredoxin]-dithiol + S-adenosyl-L-methionine + 2 H2O = methylarsonous acid + [thioredoxin]-disulfide + 3 glutathione + S-adenosyl-L-homocysteine + H(+). The enzyme catalyses arsenic triglutathione + 2 [thioredoxin]-dithiol + 2 S-adenosyl-L-methionine + H2O = dimethylarsinous acid + 2 [thioredoxin]-disulfide + 3 glutathione + 2 S-adenosyl-L-homocysteine + 2 H(+). It catalyses the reaction arsenic triglutathione + 3 [thioredoxin]-dithiol + 3 S-adenosyl-L-methionine = trimethylarsine + 3 [thioredoxin]-disulfide + 3 glutathione + 3 S-adenosyl-L-homocysteine + 3 H(+). Catalyzes the transfer of a methyl group from AdoMet to arsenite, producing methylated arsenicals. Involved in the conversion of As(III) to dimethylarsenate as the main product in the medium and also produces dimethylarsine and trimethylarsine gases. Reduces the arsenic toxicity in the cell and may contribute to the global arsenic cycling. In Aquipseudomonas alcaligenes (strain ATCC 14909 / DSM 50342 / CCUG 1425 / JCM 20561 / NBRC 14159 / NCIMB 9945 / NCTC 10367 / 1577) (Pseudomonas alcaligenes), this protein is Arsenite methyltransferase.